The chain runs to 307 residues: Serine/threonine-protein phosphatase PP2A-3 catalytic subunit (307 aa).

Mn(2+)-binding residues include Asp-55, His-57, Asp-83, and Asn-115. His-116 serves as the catalytic Proton donor. Mn(2+) contacts are provided by His-165 and His-239.

Belongs to the PPP phosphatase family. PP-2A subfamily. It depends on Mn(2+) as a cofactor.

It localises to the cytoplasm. It catalyses the reaction O-phospho-L-seryl-[protein] + H2O = L-seryl-[protein] + phosphate. The catalysed reaction is O-phospho-L-threonyl-[protein] + H2O = L-threonyl-[protein] + phosphate. The protein is Serine/threonine-protein phosphatase PP2A-3 catalytic subunit (PP2A3) of Oryza sativa subsp. indica (Rice).